The sequence spans 529 residues: UDP-glycosyltransferase (529 aa).

N-linked (GlcNAc...) asparagine glycosylation is found at Asn70 and Asn420. A helical transmembrane segment spans residues 504-524 (LDLYLVYIALFAVPVGAVRWI).

Belongs to the glycosyltransferase 28 family.

It is found in the membrane. The enzyme catalyses stromemycin aglycone + UDP-alpha-D-glucose = stromemycin + UDP + H(+). The protein operates within mycotoxin biosynthesis. Its function is as follows. UDP-glycosyltransferase; part of the gene cluster that mediates the biosynthesis of stromemycin, a depside C-glucoside with two unsaturated C9 side chains belonging to aromatic polyketide glycosides. Acts as the tailoring enzyme responsible for 3-C-glucosylation of bininalkenylresorcylic acid to yield stromemycin. The sequence is that of UDP-glycosyltransferase from Talaromyces amestolkiae.